We begin with the raw amino-acid sequence, 123 residues long: Ig heavy chain V region HPCG13 (123 aa).

The Ig-like domain maps to 1–114 (EVKLVESGGG…GSYWYFDVWG (114 aa)).

The polypeptide is Ig heavy chain V region HPCG13 (Mus musculus (Mouse)).